We begin with the raw amino-acid sequence, 451 residues long: Phosphoglucosamine mutase (451 aa).

The Phosphoserine intermediate role is filled by serine 102. Residues serine 102, aspartate 243, aspartate 245, and aspartate 247 each contribute to the Mg(2+) site. Serine 102 is modified (phosphoserine).

This sequence belongs to the phosphohexose mutase family. The cofactor is Mg(2+). Post-translationally, activated by phosphorylation.

The enzyme catalyses alpha-D-glucosamine 1-phosphate = D-glucosamine 6-phosphate. Its function is as follows. Catalyzes the conversion of glucosamine-6-phosphate to glucosamine-1-phosphate. The sequence is that of Phosphoglucosamine mutase from Chelativorans sp. (strain BNC1).